A 73-amino-acid chain; its full sequence is Translation initiation factor IF-1 (73 aa).

Residues 1–72 enclose the S1-like domain; sequence MPKKDAIEVE…TRGRVTYRFK (72 aa).

The protein belongs to the IF-1 family. In terms of assembly, component of the 30S ribosomal translation pre-initiation complex which assembles on the 30S ribosome in the order IF-2 and IF-3, IF-1 and N-formylmethionyl-tRNA(fMet); mRNA recruitment can occur at any time during PIC assembly.

Its subcellular location is the cytoplasm. In terms of biological role, one of the essential components for the initiation of protein synthesis. Stabilizes the binding of IF-2 and IF-3 on the 30S subunit to which N-formylmethionyl-tRNA(fMet) subsequently binds. Helps modulate mRNA selection, yielding the 30S pre-initiation complex (PIC). Upon addition of the 50S ribosomal subunit IF-1, IF-2 and IF-3 are released leaving the mature 70S translation initiation complex. The sequence is that of Translation initiation factor IF-1 from Dehalococcoides mccartyi (strain ATCC BAA-2266 / KCTC 15142 / 195) (Dehalococcoides ethenogenes (strain 195)).